A 45-amino-acid chain; its full sequence is Large ribosomal subunit protein bL36 (45 aa).

The interval 1–45 is disordered; the sequence is MRVSSSIKADPSKGDKLVRRKGRLYVINKKDPNRKQRQAGPARKK.

This sequence belongs to the bacterial ribosomal protein bL36 family.

The chain is Large ribosomal subunit protein bL36 from Chlamydia trachomatis serovar L2 (strain ATCC VR-902B / DSM 19102 / 434/Bu).